The sequence spans 330 residues: Taste receptor type 2 member 136 (330 aa).

At 1–32 (MKSQPVTQELHFIFPLFKTISSDIMSFLVSIA) the chain is on the extracellular side. The helical transmembrane segment at 33–53 (GIAMLAQIVLGTFANVFIVLV) threads the bilayer. Residues 54-73 (TCTDCIRRRKLFLADGILTS) lie on the Cytoplasmic side of the membrane. Residues 74 to 94 (LAFCRIGMLWVILISWCSIVF) form a helical membrane-spanning segment. Residues 95–122 (HQALSLQVRFSICVGWAVTNHFNMWLAT) lie on the Extracellular side of the membrane. The helical transmembrane segment at 123 to 143 (ILSILYLLKIGNFSNLIFLGL) threads the bilayer. Over 144–149 (KRKIKS) the chain is Cytoplasmic. A helical transmembrane segment spans residues 150-170 (VFIVVLLASLVLLFPNLITVT). Residues 171–201 (VCETVQANGYRGNLTGKTKRTYFMNLTAMIS) lie on the Extracellular side of the membrane. N-linked (GlcNAc...) asparagine glycosylation is found at Asn-183 and Asn-195. A helical transmembrane segment spans residues 202–222 (FTLDNIISFTISMVCFLLLIY). Residues 223–248 (SLCKHLRTMRLYGKGPHNPSASAHIK) lie on the Cytoplasmic side of the membrane. Residues 249-269 (ALQAVISFLLLFSMFILSLII) traverse the membrane as a helical segment. At 270-283 (SGYNYMKPLNEPVH) the chain is on the extracellular side. Residues 284–304 (LICQLIGTLYPSSHSYVLLWG) form a helical membrane-spanning segment. Residues 305 to 330 (NRRIKLAFVLAMVQVRARLWLKEEKP) lie on the Cytoplasmic side of the membrane.

The protein belongs to the G-protein coupled receptor T2R family.

The protein localises to the membrane. Its function is as follows. Putative taste receptor which may play a role in the perception of bitterness. The protein is Taste receptor type 2 member 136 of Rattus norvegicus (Rat).